The chain runs to 121 residues: Large ribosomal subunit protein uL18 (121 aa).

The protein belongs to the universal ribosomal protein uL18 family. In terms of assembly, part of the 50S ribosomal subunit; part of the 5S rRNA/L5/L18/L25 subcomplex. Contacts the 5S and 23S rRNAs.

Its function is as follows. This is one of the proteins that bind and probably mediate the attachment of the 5S RNA into the large ribosomal subunit, where it forms part of the central protuberance. This is Large ribosomal subunit protein uL18 from Burkholderia ambifaria (strain MC40-6).